The primary structure comprises 677 residues: Potassium channel KAT1 (677 aa).

Topologically, residues 1–63 (MSISWTRNFF…PFNPRYRAWE (63 aa)) are cytoplasmic. A helical membrane pass occupies residues 64–84 (MWLVLLVIYSAWICPFQFAFI). The Extracellular portion of the chain corresponds to 85–90 (TYKKDA). The chain crosses the membrane as a helical span at residues 91 to 111 (IFIIDNIVNGFFAIDIILTFF). Topologically, residues 112-134 (VAYLDSHSYLLVDSPKKIAIRYL) are cytoplasmic. Residues 135–155 (STWFAFDVCSTAPFQPLSLLF) traverse the membrane as a helical segment. Residues 156 to 165 (NYNGSELGFR) lie on the Extracellular side of the membrane. The helical; Voltage-sensor transmembrane segment at 166 to 186 (ILSMLRLWRLRRVSSLFARLE) threads the bilayer. Over 187–200 (KDIRFNYFWIRCTK) the chain is Cytoplasmic. A helical membrane pass occupies residues 201–221 (LISVTLFAIHCAGCFNYLIAD). At 222-248 (RYPNPRKTWIGAVYPNFKEASLWNRYV) the chain is on the extracellular side. The pore-forming intramembrane region spans 249–268 (TALYWSITTLTTTGYGDFHA). Topologically, residues 269–272 (ENPR) are extracellular. The chain crosses the membrane as a helical span at residues 273 to 293 (EMLFDIFFMMFNLGLTAYLIG). Residues 294–677 (NMTNLVVHWT…DGDHLYFSSN (384 aa)) lie on the Cytoplasmic side of the membrane. Position 377-496 (377-496 (LFQGVSRNFL…RVIMNNLFMK (120 aa))) interacts with a nucleoside 3',5'-cyclic phosphate. Over residues 568 to 577 (IERAKVERSS) the composition is skewed to basic and acidic residues. Positions 568-601 (IERAKVERSSSETAGRSYANDSSKKDPYCSSSNQ) are disordered. Residues 612–677 (RVTIHMMSES…DGDHLYFSSN (66 aa)) enclose the KHA domain.

The protein belongs to the potassium channel family. Plant (TC 1.A.1.4) subfamily. As to quaternary structure, the potassium channel is probably composed of a homo- or heterotetrameric complex of pore-forming subunits. May interact with AKT2 and KAT2. Interacts with SLAC1 and SLAH3. In terms of tissue distribution, expressed in guard cells, and in roots.

It is found in the membrane. Highly selective inward-rectifying potassium channel. This voltage-gated channel could mediate long-term potassium influx into guard cells leading to stomatal opening. Assuming opened or closed conformations in response to the voltage difference across the membrane, the channel is activated by hyperpolarization. The channel activity is enhanced upon external acidification. Also permeable to ammonium ions. Blocked by tetraethylammonium and barium ions. The polypeptide is Potassium channel KAT1 (KAT1) (Arabidopsis thaliana (Mouse-ear cress)).